Consider the following 229-residue polypeptide: 7-cyano-7-deazaguanine synthase (229 aa).

C8–A18 provides a ligand contact to ATP. The Zn(2+) site is built by C190, C203, C206, and C209.

Belongs to the QueC family. Requires Zn(2+) as cofactor.

It carries out the reaction 7-carboxy-7-deazaguanine + NH4(+) + ATP = 7-cyano-7-deazaguanine + ADP + phosphate + H2O + H(+). It participates in purine metabolism; 7-cyano-7-deazaguanine biosynthesis. Functionally, catalyzes the ATP-dependent conversion of 7-carboxy-7-deazaguanine (CDG) to 7-cyano-7-deazaguanine (preQ(0)). This Methanopyrus kandleri (strain AV19 / DSM 6324 / JCM 9639 / NBRC 100938) protein is 7-cyano-7-deazaguanine synthase.